Reading from the N-terminus, the 101-residue chain is Protein PrgJ (101 aa).

It to S.flexneri MxiI.

In terms of biological role, required for invasion of epithelial cells. The chain is Protein PrgJ (prgJ) from Salmonella typhimurium (strain LT2 / SGSC1412 / ATCC 700720).